The sequence spans 1368 residues: DNA-directed RNA polymerase subunit beta' (1368 aa).

Residues 1 to 38 (MTSSSKPARKTSKSKSKASKAAEAPAAPSNELSREAPT) are disordered. A compositionally biased stretch (basic residues) spans 7 to 18 (PARKTSKSKSKA). Low complexity predominate over residues 19-29 (SKAAEAPAAPS). The Zn(2+) site is built by C250, C318, C325, and C328. Residues 1340-1368 (AGEELAEEHVPDPGALEGLQEEGLLSQDS) form a disordered region. The span at 1353–1368 (GALEGLQEEGLLSQDS) shows a compositional bias: low complexity.

The protein belongs to the RNA polymerase beta' chain family. RpoC2 subfamily. In cyanobacteria the RNAP catalytic core is composed of 2 alpha, 1 beta, 1 beta', 1 gamma and 1 omega subunit. When a sigma factor is associated with the core the holoenzyme is formed, which can initiate transcription. Zn(2+) is required as a cofactor.

It catalyses the reaction RNA(n) + a ribonucleoside 5'-triphosphate = RNA(n+1) + diphosphate. In terms of biological role, DNA-dependent RNA polymerase catalyzes the transcription of DNA into RNA using the four ribonucleoside triphosphates as substrates. This Synechococcus sp. (strain RCC307) protein is DNA-directed RNA polymerase subunit beta'.